A 541-amino-acid chain; its full sequence is Atlastin-3 (541 aa).

The segment at 1-22 (MLSPQRTAAVASRGAGDAMENG) is disordered. Residues 1–25 (MLSPQRTAAVASRGAGDAMENGKPG) form an N-terminal hypervariable region (HVR) region. Over 1-445 (MLSPQRTAAV…NVFSTFRTPA (445 aa)) the chain is Cytoplasmic. Positions 57–305 (DLDVVVVSVA…LIPYVLNPSK (249 aa)) constitute a GB1/RHD3-type G domain. GDP-binding residues include Arg-70, Lys-71, Gly-72, Lys-73, Ser-74, Phe-75, and Arg-109. Asp-142 contacts Mg(2+). GDP is bound by residues Arg-213, Asp-214, Val-272, and Ser-275. The tract at residues 343 to 434 (MLQATAEANN…YENFCKHNGS (92 aa)) is 3HB (three-helix bundle) domain. The residue at position 391 (Lys-391) is an N6-acetyllysine. A helical transmembrane segment spans residues 446–466 (VLFTGIAALYIASGFTGFIGL). Residue Glu-467 is a topological domain, lumenal. The helical transmembrane segment at 468–488 (VVAQLFNCMVGLLLIALLTWG) threads the bilayer. Residues 489-541 (YIRYSGQYRELGGAIDSGAAYVLEQASSHIGNSTQAAVRDAVVGRPPADKKSQ) are Cytoplasmic-facing.

It belongs to the TRAFAC class dynamin-like GTPase superfamily. GB1/RHD3 GTPase family. GB1 subfamily. Monomeric and homodimeric. The homodimer, transiently formed by two molecules on opposing membranes, is the active form mediating ER membrane fusion. Interacts with ZFYVE27; both proteins are involved in endoplasmic reticulum tubular network organization. Interacts with REEP5; both proteins are involved in endoplasmic reticulum tubular network organization. In terms of tissue distribution, expressed in cardiomyocytes (at protein level).

It localises to the endoplasmic reticulum membrane. The enzyme catalyses GTP + H2O = GDP + phosphate + H(+). Functionally, atlastin-3 (ATL3) is a membrane-anchored GTPase that mediates the GTP-dependent fusion of endoplasmic reticulum (ER) membranes, maintaining the continuous ER network. It facilitates the formation of three-way junctions where ER tubules intersect. Two atlastin-3 on neighboring ER tubules bind GTP and form loose homodimers through the GB1/RHD3-type G domains and 3HB regions. Upon GTP hydrolysis, the 3HB regions tighten, pulling the membranes together to drive their fusion. After fusion, the homodimer disassembles upon release of inorganic phosphate (Pi). Subsequently, GDP dissociates, resetting the monomers to a conformation ready for a new fusion cycle. The sequence is that of Atlastin-3 from Mus musculus (Mouse).